A 330-amino-acid polypeptide reads, in one-letter code: Nitrilase 3 (330 aa).

Residues 4-273 (VKAAAVQISP…EGEVIVDLDF (270 aa)) enclose the CN hydrolase domain. E44 acts as the Proton acceptor in catalysis. The Proton donor role is filled by K128. The active-site Nucleophile is the C162. The segment at 310–330 (RAAHPVSGAEQGPEDLRTPAA) is disordered.

This sequence belongs to the carbon-nitrogen hydrolase superfamily. Nitrilase family.

It catalyses the reaction a nitrile + 2 H2O = a carboxylate + NH4(+). Nitrilases catalyze the mild hydrolytic conversion of organonitriles directly to the corresponding carboxylic acids. The polypeptide is Nitrilase 3 (Unknown prokaryotic organism).